The primary structure comprises 5537 residues: Histone-lysine N-methyltransferase 2D (5537 aa).

A disordered region spans residues 1 to 60; it reads MDSQKLAGEDKDSEPAADGPAASEDPSATESDLPNPHVGEVSVLSSGSPRLQETPQDCSG. A Phosphoserine modification is found at S27. Residues 43–57 are compositionally biased toward polar residues; the sequence is VLSSGSPRLQETPQD. The C2HC pre-PHD-type 1; degenerate zinc finger occupies 104–149; the sequence is GPNEAVLPSEDLSQIGFPEGLTPAHLGEPGGSCWAHHWCAAWSAGV. PHD-type zinc fingers lie at residues 170–218, 226–276, and 273–323; these read QRCS…PEHS, EARC…CKVC, and CKVC…CRVC. The RING-type 1; atypical zinc-finger motif lies at 229–274; the sequence is CAVCEGPGELCDLFFCTSCGHHYHGACLDTALTARKRAGWQCPECK. The RING-type 2; degenerate zinc-finger motif lies at 276–321; sequence CQACRKPGNDSKMLVCETCDKGYHTFCLKPPMEELPAHSWKCKACR. Disordered regions lie at residues 368–387, 393–416, 436–1331, and 1340–1359; these read VCSRFSPPEPGDTPTDEPDA, QGQPKGGHVTSMQPKEPGPLQCEA, EEMP…RLKS, and VVADIDSSPSKEEEEEDDDT. The segment at 439–668 is 15 X 5 AA repeats of S/P-P-P-E/P-E/A; it reads PLLPPPEESP…VSRLSPPPEE (230 aa). Over residues 440–473 the composition is skewed to pro residues; that stretch reads LLPPPEESPLSPPPEESPTSPPPEASRLSPPPEE. Repeat copies occupy residues 442 to 446, 460 to 464, and 469 to 473. Low complexity predominate over residues 474–483; that stretch reads LPASPLPEAL. A compositionally biased stretch (pro residues) spans 494 to 509; it reads LSPPPEESPLSPPPES. 2 consecutive repeat copies span residues 496–500 and 504–508. Residues 510–519 show a composition bias toward low complexity; that stretch reads SPFSPLEESP. Composition is skewed to pro residues over residues 520–547 and 554–595; these read LSPPEESPPSPALETPLSPPPEASPLSP and LSPP…PPPE. A run of 5 repeats spans residues 521-525, 555-559, 564-568, 573-577, and 582-586. Positions 596 to 607 are enriched in low complexity; the sequence is ASRLFPPFEESP. Residues 608–649 are compositionally biased toward pro residues; it reads LSPPPEESPLSPPPEASRLSPPPEDSPMSPPPEESPMSPPPE. 4 repeat units span residues 609-613, 618-622, 627-631, and 645-649. Positions 650-662 are enriched in low complexity; sequence VSRLSPLPVVSRL. Residues 663-667 form repeat 15; that stretch reads SPPPE. Residues 663–712 are compositionally biased toward pro residues; the sequence is SPPPEESPLSPPPEESPTSPPPEASRLSPPPEDSPTSPPPEDSPASPPPE. Positions 713 to 725 are enriched in low complexity; the sequence is DSLMSLPLEESPL. S744 is modified (phosphoserine). Basic and acidic residues-rich tracts occupy residues 745–760 and 845–869; these read PRPEEPHLSPRPEEPH and RPEESHLSPELEKPPLSPRPEKPPE. Composition is skewed to low complexity over residues 889 to 903 and 911 to 928; these read PSLSPLLGEPALSEP and LPEELPLSPSGEPSLSPQ. Positions 929 to 940 are enriched in pro residues; the sequence is LMPPDPLPPPLS. A compositionally biased stretch (low complexity) spans 941-954; sequence PIITAAAPPALSPL. The segment covering 994–1008 has biased composition (pro residues); sequence EPVPPMILPPSPGSP. Residues 1048 to 1057 are compositionally biased toward low complexity; sequence PLSVPSPLSP. Basic and acidic residues predominate over residues 1068 to 1080; it reads AELHEMETEKVSE. S1151 bears the Phosphoserine mark. T1195 is subject to Phosphothreonine. A compositionally biased stretch (polar residues) spans 1207–1216; sequence EISNLSQGDA. S1249 carries the phosphoserine modification. T1267 is subject to Phosphothreonine. S1270 is modified (phosphoserine). Basic residues-rich tracts occupy residues 1289–1302 and 1310–1329; these read GRRRSSPARSRIKQ and GRRRPRGGAHGGRGRGRARL. PHD-type zinc fingers lie at residues 1377–1430, 1427–1477, and 1504–1559; these read QDMC…CIVC, CIVC…CVSC, and LVTC…CQPY. An RING-type 3; atypical zinc finger spans residues 1507 to 1557; the sequence is CPICHAPYVEEDLLIQCRHCERWMHAGCESLFTEDDVEQAADEGFDCVSCQ. A Phosphoserine modification is found at S1606. Disordered regions lie at residues 1610-1767, 1793-1889, 1904-2002, and 2165-2683; these read KRRQ…LEDM, GVGR…MESK, EQHL…NQRS, and PQVP…QRQR. Residues 1637 to 1666 show a composition bias toward basic and acidic residues; the sequence is PDDKKDGDLDTDELLKGEGGVEHMECEIKL. Position 1671 is a phosphoserine (S1671). Basic and acidic residues predominate over residues 1675 to 1685; that stretch reads EPGKEETEESK. Basic residues-rich tracts occupy residues 1702–1712 and 1753–1762; these read RQRKSHTRTKK and KQQRRGRKKS. Basic and acidic residues-rich tracts occupy residues 1806–1825 and 1832–1841; these read AKGDGGSERKELPTSQKGDD and EESRGLEGKA. 2 positions are modified to phosphoserine: S1820 and S1834. T1843 and T1865 each carry phosphothreonine. Positions 1874 to 1889 are enriched in basic and acidic residues; the sequence is DLDRISTEELPKMESK. A compositionally biased stretch (low complexity) spans 1979-1990; the sequence is TTPSTPTTPTTE. Over residues 2190–2209 the composition is skewed to pro residues; sequence PTAPPTYPPYPSPTGAPAQP. S2239 carries the post-translational modification Phosphoserine. T2240 is subject to Phosphothreonine. Position 2246 is an N6-acetyllysine (K2246). Phosphoserine is present on residues S2260 and S2274. The segment covering 2280–2292 has biased composition (basic and acidic residues); that stretch reads ESRKALEVKKEEL. 3 positions are modified to phosphoserine: S2309, S2311, and S2342. Pro residues-rich tracts occupy residues 2350–2365 and 2379–2393; these read QEPPPAQALAPSPPSH and AQPPLTPRPQPPPPE. 2 stretches are compositionally biased toward low complexity: residues 2409 to 2431 and 2494 to 2505; these read SRVPASPQSQSSSQSPLTPRPLS and FPAALPAGPAGE. Residue R2535 is modified to Asymmetric dimethylarginine. Residues 2547 to 2560 show a composition bias toward pro residues; that stretch reads LKPPVPQPGLPPPH. The span at 2574–2584 shows a compositional bias: polar residues; that stretch reads KPQSTNYTVAT. Positions 2589 to 2609 are enriched in low complexity; sequence PSGSPLGPSSGSTGESYGLSP. Residues 2610 to 2621 show a composition bias toward pro residues; the sequence is LRPPSVLPPPAP. S2640 carries the post-translational modification Phosphoserine. Positions 2669-2707 form a coiled coil; that stretch reads MSGLSQTELEKQRQRQRLRELLIRQQIQRNTLRQEKETA. The LXXLL motif 1 motif lies at 2686-2690; that stretch reads LRELL. Disordered regions lie at residues 2697–2814 and 2835–2996; these read RNTL…QQQQ and ARFP…LDDD. Residues 2707-2722 are compositionally biased toward low complexity; that stretch reads AAAAAGAVGPPGSWGA. Composition is skewed to polar residues over residues 2733–2746 and 2781–2790; these read SRGQTPFAGTQDKS and PSSMDVNSRQ. R2836 bears the Asymmetric dimethylarginine mark. Positions 2931-2940 are enriched in pro residues; that stretch reads PQKPSAPPAP. Residues 3038 to 3042 carry the LXXLL motif 2 motif; that stretch reads LDDLL. The disordered stretch occupies residues 3078-3110; the sequence is EKAEREALLRGVEPGPLGPEERPPPAADASEPR. K3079 bears the N6-acetyllysine mark. S3130 is modified (phosphoserine). Disordered stretches follow at residues 3147–3209 and 3263–3339; these read ANSL…GSSL and KQQL…AHAL. T3197 carries the post-translational modification Phosphothreonine. 3 stretches are compositionally biased toward low complexity: residues 3198 to 3209, 3263 to 3289, and 3301 to 3320; these read PSPLSGPGGSSL, KQQLSAQLQPAQQQQQQQQQHSLLSAP, and GSSPSLAGSQQQLSLGLAGA. Phosphoserine is present on S3199. A coiled-coil region spans residues 3249–3282; sequence IEDLLEHEKKELQKKQQLSAQLQPAQQQQQQQQQ. Positions 3325–3334 are enriched in pro residues; it reads LPQPLMPTQP. The residue at position 3433 (K3433) is an N6-acetyllysine. 2 disordered regions span residues 3462–3499 and 3596–3673; these read LSGGPSSDLQNHVAAGSGQERSAGDPSQPRPNPPTFAQ and RNKQ…GPFL. A coiled-coil region spans residues 3562–3614; it reads EKLKLVTEQQSKIQKQLDQVRKQQKEHTNLMAEYRNKQQQQQQQQQQQQQQHS. Composition is skewed to low complexity over residues 3599–3612 and 3631–3643; these read QQQQQQQQQQQQQQ and LPGQLLPGHGLQP. Residues 3714-3750 are a coiled coil; sequence RLLQERQLQLQQQRMQLAQKLQQQQQQQQQQQHLLGQ. R3727 carries the asymmetric dimethylarginine modification. Residues 3758-3802 form a disordered region; it reads QQGPGVQTNQALGPKPQGLMPPSSHQGLLVQQLSPQPPQGPQGML. The stretch at 3897-3975 forms a coiled coil; the sequence is LQQLQQQQQL…FQQQQQQQQM (79 aa). Positions 3984 to 4191 are disordered; sequence LLSPQQQQQQ…GQGLPGVGIM (208 aa). Over residues 4012-4023 the composition is skewed to low complexity; sequence PGALGPTLLLTG. The segment covering 4024-4045 has biased composition (polar residues); that stretch reads KEQNTVDPAVSSEATEGPSTHQ. Low complexity predominate over residues 4073–4108; sequence SQLLLVQPQPQPQPSSLQLQPPLRLPGQQQQQVSLL. The span at 4111 to 4120 shows a compositional bias: gly residues; it reads AGGGSHGQLG. Polar residues predominate over residues 4137 to 4154; that stretch reads PSVSLGDQPGSMTQNLLG. Residue R4198 is modified to Asymmetric dimethylarginine. S4215 is subject to Phosphoserine. The LXXLL motif 3 motif lies at 4222–4226; it reads LQALL. Disordered stretches follow at residues 4233–4398 and 4410–4452; these read QSQA…VPGH and ASQL…LLLA. The span at 4237-4251 shows a compositional bias: polar residues; that stretch reads VRQTPPYQEPGTQTS. The span at 4252–4282 shows a compositional bias: low complexity; that stretch reads PLQGLLGCQPQLGGFPGPQTGPLQELGAGPR. The LXXLL motif 4 motif lies at 4253-4257; the sequence is LQGLL. The span at 4283–4293 shows a compositional bias: pro residues; that stretch reads PQGPPRLPAPP. 2 stretches are compositionally biased toward low complexity: residues 4294–4305 and 4320–4331; these read GALSTGPVLGPV and PSQLPSPSSQLP. The segment covering 4338–4357 has biased composition (pro residues); that stretch reads PTHPGTPKPQGPTLEPPPGR. S4359 is modified (phosphoserine). An LXXLL motif 5 motif is present at residues 4463–4467; that stretch reads LQKLL. K4465 is modified (N6-acetyllysine). Disordered stretches follow at residues 4503-4544 and 4613-4727; these read QGTP…KEDG and KNNL…HLGS. A compositionally biased stretch (pro residues) spans 4619–4633; sequence PPTPPSSLPPTPPPS. Positions 4648-4673 are enriched in basic and acidic residues; sequence LGEHPKDAASARDSERALRDTSEVKS. S4738 bears the Phosphoserine mark. Residue K4756 forms a Glycyl lysine isopeptide (Lys-Gly) (interchain with G-Cter in SUMO2) linkage. K4776 is modified (N6-acetyllysine). S4822 and S4849 each carry phosphoserine. The interval 4822 to 4857 is disordered; sequence SPARAGTEPKKGEAEGPGGKEKGLEGKSPDTGPDWL. A compositionally biased stretch (basic and acidic residues) spans 4828 to 4849; sequence TEPKKGEAEGPGGKEKGLEGKS. Residue K4880 forms a Glycyl lysine isopeptide (Lys-Gly) (interchain with G-Cter in SUMO2) linkage. The interval 4905–4980 is disordered; it reads QLSAPPPEEP…GEDSRPPRLK (76 aa). Positions 4908–4931 are enriched in pro residues; that stretch reads APPPEEPSPPPSPLAPSPASPPTE. Residues 4932 to 4941 show a composition bias toward low complexity; the sequence is PLVELPTEPL. The span at 4966–4976 shows a compositional bias: basic and acidic residues; the sequence is RPPEEGEDSRP. The LXXLL motif 6 signature appears at 4990-4994; sequence LRLLL. Residues 5029-5069 form a C2HC pre-PHD-type 2 zinc finger; the sequence is MRRCCFCHEEGDGATDGPARLLNLDLDLWVHLNCALWSTEV. The PHD-type 7 zinc finger occupies 5090–5137; that stretch reads TKCSLCQRTGATSSCNRMRCPNVYHFACAIRAKCMFFKDKTMLCPMHK. The 61-residue stretch at 5175 to 5235 folds into the FYR N-terminal domain; that stretch reads LHMFRVGGLV…CCYRCSIGEN (61 aa). In terms of domain architecture, FYR C-terminal spans 5236 to 5321; the sequence is NGRPEFVIKV…ESCQNYLFRY (86 aa). The WDR5 interaction motif (WIN) signature appears at 5337-5342; that stretch reads GCARSE. An SET domain is found at 5397-5513; sequence NNVYLARSRI…KGEELTYDYQ (117 aa). S-adenosyl-L-methionine is bound by residues Y5451 and 5474-5475; that span reads NH. Zn(2+) contacts are provided by C5477, C5525, C5527, and C5532. Residues 5521–5537 form the Post-SET domain; it reads HKIPCHCGAWNCRKWMN.

This sequence belongs to the class V-like SAM-binding methyltransferase superfamily. Histone-lysine methyltransferase family. TRX/MLL subfamily. As to quaternary structure, component of the MLL2 complex (also named ASCOM complex), at least composed of catalytic subunit KMT2D/MLL2, ASH2L, RBBP5, WDR5, NCOA6, DPY30, KDM6A, PAXIP1/PTIP, PAGR1 and alpha- and beta-tubulin. Forms a core complex with the evolutionary conserved subcomplex WRAD composed of WDR5, RBBP5, ASH2L/ASH2 and DPY30 subunits; WRAD differentially stimulates the methyltransferase activity. Interacts with ESR1; interaction is direct. Interacts (via WIN motif) with WDR5. As to expression, expressed in most adult tissues, including a variety of hematoipoietic cells, with the exception of the liver.

Its subcellular location is the nucleus. The enzyme catalyses L-lysyl(4)-[histone H3] + S-adenosyl-L-methionine = N(6)-methyl-L-lysyl(4)-[histone H3] + S-adenosyl-L-homocysteine + H(+). Functionally, histone methyltransferase that catalyzes methyl group transfer from S-adenosyl-L-methionine to the epsilon-amino group of 'Lys-4' of histone H3 (H3K4). Part of chromatin remodeling machinery predominantly forms H3K4me1 methylation marks at active chromatin sites where transcription and DNA repair take place. Acts as a coactivator for estrogen receptor by being recruited by ESR1, thereby activating transcription. The polypeptide is Histone-lysine N-methyltransferase 2D (KMT2D) (Homo sapiens (Human)).